A 255-amino-acid chain; its full sequence is MRILCTNDDGIHAPGLKVIEEIARALSDDVWIVAPELDQSGVSHSLSLNDPLRLREVGPRHFAVRGTPTDCVIMGARHILGEKRPDLVLSGVNKGRNVAEDVVYSGTIAGALEGTILGLPSFALSQEFSIATRDKPSWDTALKFGPQIVRKVLDAGVPKNTVINVNFPSCAPDQVKGIVVTRQGKRNLGFLKVDERRDGRGNPYFWIGFDRAAALDVPEEGTDLAALAAHYVSVTPLRLDRTDEAFSGKLGSILA.

The a divalent metal cation site is built by Asp8, Asp9, Ser40, and Asn93.

It belongs to the SurE nucleotidase family. It depends on a divalent metal cation as a cofactor.

It localises to the cytoplasm. The enzyme catalyses a ribonucleoside 5'-phosphate + H2O = a ribonucleoside + phosphate. Its function is as follows. Nucleotidase that shows phosphatase activity on nucleoside 5'-monophosphates. The polypeptide is 5'-nucleotidase SurE (Bradyrhizobium sp. (strain ORS 278)).